A 467-amino-acid polypeptide reads, in one-letter code: Chromosomal replication initiator protein DnaA (467 aa).

Residues 1–90 are domain I, interacts with DnaA modulators; sequence MSLSLWQQCL…KPVTQTPQAA (90 aa). Residues 91 to 130 are domain II; that stretch reads VTSNVAAPAQVAQTQPQRAAPSMRSGWDNVPAPAEPTYRS. The segment at 131–347 is domain III, AAA+ region; that stretch reads NVNVKHTFDN…GALNRVIANA (217 aa). ATP contacts are provided by glycine 175, glycine 177, lysine 178, and threonine 179. The segment at 348-467 is domain IV, binds dsDNA; it reads NFTGRAITID…FSNLIRTLSS (120 aa).

The protein belongs to the DnaA family. As to quaternary structure, oligomerizes as a right-handed, spiral filament on DNA at oriC.

It is found in the cytoplasm. Plays an essential role in the initiation and regulation of chromosomal replication. ATP-DnaA binds to the origin of replication (oriC) to initiate formation of the DNA replication initiation complex once per cell cycle. Binds the DnaA box (a 9 base pair repeat at the origin) and separates the double-stranded (ds)DNA. Forms a right-handed helical filament on oriC DNA; dsDNA binds to the exterior of the filament while single-stranded (ss)DNA is stabiized in the filament's interior. The ATP-DnaA-oriC complex binds and stabilizes one strand of the AT-rich DNA unwinding element (DUE), permitting loading of DNA polymerase. After initiation quickly degrades to an ADP-DnaA complex that is not apt for DNA replication. Binds acidic phospholipids. This Escherichia coli (strain ATCC 8739 / DSM 1576 / NBRC 3972 / NCIMB 8545 / WDCM 00012 / Crooks) protein is Chromosomal replication initiator protein DnaA.